The primary structure comprises 156 residues: Protein eva-1 homolog A (156 aa).

A helical transmembrane segment spans residues 40 to 60; that stretch reads ALYFVSGVCIGLFLTLAALVM. The segment at 79-100 is disordered; it reads DRECSDSSDSEDGSEDTASDLS. Positions 84–96 are enriched in acidic residues; it reads DSSDSEDGSEDTA. The residue at position 110 (Thr110) is a Phosphothreonine. At Ser118 the chain carries Phosphoserine.

Belongs to the EVA1 family.

It is found in the endoplasmic reticulum membrane. Its subcellular location is the lysosome membrane. Acts as a regulator of programmed cell death, mediating both autophagy and apoptosis. The sequence is that of Protein eva-1 homolog A (Eva1a) from Mus musculus (Mouse).